A 639-amino-acid polypeptide reads, in one-letter code: Exocyst complex component EXO70E2 (639 aa).

This sequence belongs to the EXO70 family. As to quaternary structure, component of the exocyst complex and of the exocyst-positive organelle (EXPO). Interacts with SEC6, SEC10A and SEC10B. As to expression, expressed in roots, in the root-hair zone, both in root hair and nonhair cells.

It localises to the secreted. Its subcellular location is the extracellular exosome. The protein localises to the cell membrane. It is found in the cytoplasm. The protein resides in the endomembrane system. Influences the subcellular localization patterns of other exocyst complex proteins (e.g. SEC5A, SEC15A, SEC15B and EXO84B) leading to their recruitment to exocyst, well-defined large punctate structures throughout the cytosol. Essential component for the formation and the recruitment of exocyst subunits to the exocyst-positive organelle (EXPO), a secreted double membrane structure also called extracellular exosome, that acts as a sequester for cytosolic proteins to release them into the apoplast. In Arabidopsis thaliana (Mouse-ear cress), this protein is Exocyst complex component EXO70E2.